The sequence spans 795 residues: RalBP1-associated Eps domain-containing protein 1 (795 aa).

Residues 10–113 form the EH 1 domain; the sequence is EQKYYSDLFS…SKNEQESRLA (104 aa). The disordered stretch occupies residues 112-238; it reads LAASYSSDSE…NWVSFADTPP (127 aa). Over residues 115-126 the composition is skewed to polar residues; sequence SYSSDSENQGSY. A phosphoserine mark is found at serine 145, serine 162, serine 166, and serine 170. Low complexity predominate over residues 156 to 168; it reads EQQEPVSPVVSPQ. A Phosphothreonine modification is found at threonine 173. Low complexity predominate over residues 205-216; that stretch reads GDAQAGSSAGDA. A phosphoserine mark is found at serine 272 and serine 273. An EH 2 domain is found at 285 to 374; the sequence is QRQYYVNQFK…ESLMPKLIDL (90 aa). Tyrosine 288 bears the Phosphotyrosine mark. Residue serine 307 is modified to Phosphoserine. The EF-hand domain maps to 318 to 353; sequence LPILELSHIWELSDFDKDGALTLDEFCAAFHLVVAR. Aspartate 331, aspartate 333, aspartate 335, and glutamate 342 together coordinate Ca(2+). Disordered regions lie at residues 380–433 and 469–720; these read VGEQ…SSQT and ELKR…DEHT. Polar residues predominate over residues 407–433; sequence LNQTWPELNQSSEQWETFSERSSSSQT. Phosphoserine is present on residues serine 475, serine 482, and serine 489. Composition is skewed to polar residues over residues 497–518 and 525–542; these read INSS…SDSF and IGSS…SPDN. Serine 539 bears the Phosphoserine mark. At threonine 543 the chain carries Phosphothreonine. Residues 543–553 are compositionally biased toward pro residues; that stretch reads TAPPPPPPRPQ. A Phosphoserine modification is found at serine 561. Residues 562 to 573 are compositionally biased toward polar residues; the sequence is LDMNRTFAVTTG. Residues 574–583 show a composition bias toward low complexity; sequence QQQAGVVAHP. Positions 584–595 are enriched in pro residues; sequence PAVPPRPQPSQA. 2 stretches are compositionally biased toward polar residues: residues 611–622 and 681–692; these read THTSTSPQQIPE and ATNVPANVSKGT. Positions 651–795 are interaction with RALBP1; it reads HPEVLPAEKA…LEQLRPFSHL (145 aa). The span at 707-720 shows a compositional bias: basic and acidic residues; the sequence is KSEDELRPDVDEHT. Phosphoserine is present on residues serine 708 and serine 739. Positions 750–790 form a coiled coil; sequence SIRRNKETNTVLARLNSELQQQLKDVLEERISLEVQLEQLR.

Homodimer (Potential). Interacts with RALBP1, CRK and GRB2. Binding to RALBP1 does not affect its Ral-binding activity. Forms a complex with the SH3 domains of CRK and GRB2 which may link it to an EGF-responsive tyrosine kinase. Interacts with RAB11FIP2. Interacts with AMPH, ITSN1 (via SH3 domains) and SGIP1; may be involved in clathrin-mediated endocytosis. In terms of processing, EGF stimulates phosphorylation on Tyr-residues. In terms of tissue distribution, expressed in all tissues examined. The highest level expression was found in the kidney and testis.

It is found in the membrane. The protein localises to the clathrin-coated pit. In terms of biological role, may coordinate the cellular actions of activated EGF receptors and Ral-GTPases. This is RalBP1-associated Eps domain-containing protein 1 (Reps1) from Mus musculus (Mouse).